The primary structure comprises 1216 residues: ATP-dependent helicase/nuclease subunit A (1216 aa).

Residues 26–488 (QKKTAEQIEA…IILKENFRSS (463 aa)) form the UvrD-like helicase ATP-binding domain. 47-54 (ASAGSGKT) contributes to the ATP binding site. The region spanning 515–802 (KHQLVFANTK…ELMTIHKSKG (288 aa)) is the UvrD-like helicase C-terminal domain.

Belongs to the helicase family. AddA subfamily. As to quaternary structure, heterodimer of AddA and AddB/RexB. It depends on Mg(2+) as a cofactor.

The catalysed reaction is Couples ATP hydrolysis with the unwinding of duplex DNA by translocating in the 3'-5' direction.. It catalyses the reaction ATP + H2O = ADP + phosphate + H(+). The heterodimer acts as both an ATP-dependent DNA helicase and an ATP-dependent, dual-direction single-stranded exonuclease. Recognizes the chi site generating a DNA molecule suitable for the initiation of homologous recombination. The AddA nuclease domain is required for chi fragment generation; this subunit has the helicase and 3' -&gt; 5' nuclease activities. In Streptococcus pneumoniae serotype 2 (strain D39 / NCTC 7466), this protein is ATP-dependent helicase/nuclease subunit A.